Reading from the N-terminus, the 471-residue chain is tRNA(Ile)-lysidine synthase (471 aa).

Residue 35–40 (SGGADS) coordinates ATP.

The protein belongs to the tRNA(Ile)-lysidine synthase family.

Its subcellular location is the cytoplasm. The enzyme catalyses cytidine(34) in tRNA(Ile2) + L-lysine + ATP = lysidine(34) in tRNA(Ile2) + AMP + diphosphate + H(+). In terms of biological role, ligates lysine onto the cytidine present at position 34 of the AUA codon-specific tRNA(Ile) that contains the anticodon CAU, in an ATP-dependent manner. Cytidine is converted to lysidine, thus changing the amino acid specificity of the tRNA from methionine to isoleucine. The sequence is that of tRNA(Ile)-lysidine synthase from Geobacter sulfurreducens (strain ATCC 51573 / DSM 12127 / PCA).